A 513-amino-acid polypeptide reads, in one-letter code: Histidine ammonia-lyase (513 aa).

Positions 145–147 form a cross-link, 5-imidazolinone (Ala-Gly); the sequence is ASG. Serine 146 carries the 2,3-didehydroalanine (Ser) modification.

This sequence belongs to the PAL/histidase family. Post-translationally, contains an active site 4-methylidene-imidazol-5-one (MIO), which is formed autocatalytically by cyclization and dehydration of residues Ala-Ser-Gly.

Its subcellular location is the cytoplasm. It catalyses the reaction L-histidine = trans-urocanate + NH4(+). The protein operates within amino-acid degradation; L-histidine degradation into L-glutamate; N-formimidoyl-L-glutamate from L-histidine: step 1/3. The protein is Histidine ammonia-lyase of Vibrio vulnificus (strain YJ016).